Consider the following 282-residue polypeptide: Aldo-keto reductase MUL_1987 (282 aa).

Residue tyrosine 57 is the Proton donor of the active site. Residues leucine 197, isoleucine 235, serine 238, threonine 246, asparagine 247, and arginine 273 each coordinate NADPH.

This sequence belongs to the aldo/keto reductase family.

The protein is Aldo-keto reductase MUL_1987 of Mycobacterium ulcerans (strain Agy99).